Consider the following 340-residue polypeptide: Ketol-acid reductoisomerase (NADP(+)) (340 aa).

In terms of domain architecture, KARI N-terminal Rossmann spans Ala2–Thr182. NADP(+) is bound by residues Phe25–Gln28, Ser51, Ser53, and Asp83–Gln86. His108 is an active-site residue. Residue Gly134 participates in NADP(+) binding. Residues Thr183 to Val328 enclose the KARI C-terminal knotted domain. The Mg(2+) site is built by Asp191, Glu195, Glu227, and Glu231. Position 252 (Ser252) interacts with substrate.

It belongs to the ketol-acid reductoisomerase family. The cofactor is Mg(2+).

The catalysed reaction is (2R)-2,3-dihydroxy-3-methylbutanoate + NADP(+) = (2S)-2-acetolactate + NADPH + H(+). It carries out the reaction (2R,3R)-2,3-dihydroxy-3-methylpentanoate + NADP(+) = (S)-2-ethyl-2-hydroxy-3-oxobutanoate + NADPH + H(+). It functions in the pathway amino-acid biosynthesis; L-isoleucine biosynthesis; L-isoleucine from 2-oxobutanoate: step 2/4. Its pathway is amino-acid biosynthesis; L-valine biosynthesis; L-valine from pyruvate: step 2/4. Functionally, involved in the biosynthesis of branched-chain amino acids (BCAA). Catalyzes an alkyl-migration followed by a ketol-acid reduction of (S)-2-acetolactate (S2AL) to yield (R)-2,3-dihydroxy-isovalerate. In the isomerase reaction, S2AL is rearranged via a Mg-dependent methyl migration to produce 3-hydroxy-3-methyl-2-ketobutyrate (HMKB). In the reductase reaction, this 2-ketoacid undergoes a metal-dependent reduction by NADPH to yield (R)-2,3-dihydroxy-isovalerate. The chain is Ketol-acid reductoisomerase (NADP(+)) from Chloroflexus aggregans (strain MD-66 / DSM 9485).